The following is an 856-amino-acid chain: Translation initiation factor IF-2 (856 aa).

The tr-type G domain maps to 356–526 (PRAPVVTVMG…LLIADLLELK (171 aa)). The segment at 365–372 (GHVDHGKT) is G1. 365–372 (GHVDHGKT) lines the GTP pocket. Positions 390–394 (GITQH) are G2. The interval 412–415 (DTPG) is G3. GTP-binding positions include 412–416 (DTPGH) and 466–469 (NKID). Residues 466-469 (NKID) are G4. Residues 502–504 (SAK) form a G5 region.

It belongs to the TRAFAC class translation factor GTPase superfamily. Classic translation factor GTPase family. IF-2 subfamily.

The protein resides in the cytoplasm. Functionally, one of the essential components for the initiation of protein synthesis. Protects formylmethionyl-tRNA from spontaneous hydrolysis and promotes its binding to the 30S ribosomal subunits. Also involved in the hydrolysis of GTP during the formation of the 70S ribosomal complex. The chain is Translation initiation factor IF-2 from Ehrlichia ruminantium (strain Gardel).